We begin with the raw amino-acid sequence, 147 residues long: 3-dehydroquinate dehydratase (147 aa).

Y22 serves as the catalytic Proton acceptor. Positions 76, 82, and 89 each coordinate substrate. Residue H102 is the Proton donor of the active site. Residues 103-104 (IS) and R113 contribute to the substrate site.

Belongs to the type-II 3-dehydroquinase family. As to quaternary structure, homododecamer.

It catalyses the reaction 3-dehydroquinate = 3-dehydroshikimate + H2O. Its pathway is metabolic intermediate biosynthesis; chorismate biosynthesis; chorismate from D-erythrose 4-phosphate and phosphoenolpyruvate: step 3/7. Functionally, catalyzes a trans-dehydration via an enolate intermediate. The protein is 3-dehydroquinate dehydratase of Fusobacterium nucleatum subsp. nucleatum (strain ATCC 25586 / DSM 15643 / BCRC 10681 / CIP 101130 / JCM 8532 / KCTC 2640 / LMG 13131 / VPI 4355).